The chain runs to 464 residues: Arginine biosynthesis bifunctional protein ArgJ, mitochondrial (464 aa).

Substrate-binding residues include Thr-191, Lys-220, Thr-231, Glu-318, Asn-459, and Thr-464. Thr-231 (nucleophile) is an active-site residue.

This sequence belongs to the ArgJ family. In terms of assembly, heterodimer of an alpha and a beta chain. The alpha and beta chains are autoproteolytically processed from a single precursor protein within the mitochondrion.

It is found in the mitochondrion matrix. It carries out the reaction N(2)-acetyl-L-ornithine + L-glutamate = N-acetyl-L-glutamate + L-ornithine. The catalysed reaction is L-glutamate + acetyl-CoA = N-acetyl-L-glutamate + CoA + H(+). Its pathway is amino-acid biosynthesis; L-arginine biosynthesis; L-ornithine and N-acetyl-L-glutamate from L-glutamate and N(2)-acetyl-L-ornithine (cyclic): step 1/1. It participates in amino-acid biosynthesis; L-arginine biosynthesis; N(2)-acetyl-L-ornithine from L-glutamate: step 1/4. Functionally, catalyzes two activities which are involved in the cyclic version of arginine biosynthesis: the synthesis of acetylglutamate from glutamate and acetyl-CoA, and of ornithine by transacetylation between acetylornithine and glutamate. This is Arginine biosynthesis bifunctional protein ArgJ, mitochondrial from Pyricularia oryzae (strain 70-15 / ATCC MYA-4617 / FGSC 8958) (Rice blast fungus).